We begin with the raw amino-acid sequence, 409 residues long: Phosphopentomutase (409 aa).

Mn(2+) contacts are provided by aspartate 10, aspartate 302, histidine 307, aspartate 343, histidine 344, and histidine 355.

It belongs to the phosphopentomutase family. Mn(2+) serves as cofactor.

The protein resides in the cytoplasm. It carries out the reaction 2-deoxy-alpha-D-ribose 1-phosphate = 2-deoxy-D-ribose 5-phosphate. It catalyses the reaction alpha-D-ribose 1-phosphate = D-ribose 5-phosphate. It participates in carbohydrate degradation; 2-deoxy-D-ribose 1-phosphate degradation; D-glyceraldehyde 3-phosphate and acetaldehyde from 2-deoxy-alpha-D-ribose 1-phosphate: step 1/2. In terms of biological role, isomerase that catalyzes the conversion of deoxy-ribose 1-phosphate (dRib-1-P) and ribose 1-phosphate (Rib-1-P) to deoxy-ribose 5-phosphate (dRib-5-P) and ribose 5-phosphate (Rib-5-P), respectively. The protein is Phosphopentomutase of Chelativorans sp. (strain BNC1).